We begin with the raw amino-acid sequence, 348 residues long: Protein RecA (348 aa).

Residue Gly-67–Thr-74 participates in ATP binding.

The protein belongs to the RecA family.

The protein localises to the cytoplasm. In terms of biological role, can catalyze the hydrolysis of ATP in the presence of single-stranded DNA, the ATP-dependent uptake of single-stranded DNA by duplex DNA, and the ATP-dependent hybridization of homologous single-stranded DNAs. It interacts with LexA causing its activation and leading to its autocatalytic cleavage. The polypeptide is Protein RecA (Salinispora tropica (strain ATCC BAA-916 / DSM 44818 / JCM 13857 / NBRC 105044 / CNB-440)).